Consider the following 244-residue polypeptide: 3-oxoacyl-[acyl-carrier-protein] reductase FabG (244 aa).

Residues 12-15 (GASR) and Thr37 each bind NADP(+). Ca(2+) contacts are provided by Gly50 and Gly53. Residues 59-60 (NV) and Asn86 each bind NADP(+). Ser138 contacts substrate. Asn145 serves as a coordination point for Ca(2+). Tyr151 functions as the Proton acceptor in the catalytic mechanism. NADP(+) is bound by residues 151–155 (YAAAK) and Ile184. Residues Glu233 and Thr234 each coordinate Ca(2+).

Belongs to the short-chain dehydrogenases/reductases (SDR) family. Homotetramer.

It catalyses the reaction a (3R)-hydroxyacyl-[ACP] + NADP(+) = a 3-oxoacyl-[ACP] + NADPH + H(+). The protein operates within lipid metabolism; fatty acid biosynthesis. Its function is as follows. Catalyzes the NADPH-dependent reduction of beta-ketoacyl-ACP substrates to beta-hydroxyacyl-ACP products, the first reductive step in the elongation cycle of fatty acid biosynthesis. This Salmonella typhi protein is 3-oxoacyl-[acyl-carrier-protein] reductase FabG (fabG).